An 839-amino-acid polypeptide reads, in one-letter code: NT-3 growth factor receptor (839 aa).

Residues 1 to 31 (MDVSLCPAKCSFWRIFLLGSVWLDYVGSVLA) form the signal peptide. 2 disulfide bridges follow: Cys32–Cys38 and Cys36–Cys45. At 32–429 (CPANCVCSKT…TVTHKPEEDT (398 aa)) the chain is on the extracellular side. 2 N-linked (GlcNAc...) asparagine glycosylation sites follow: Asn72 and Asn79. LRR repeat units lie at residues 104–125 (GLQKLTIKNSGLRSIQPRAFAK) and 128–149 (HLRYINLSSNRLTTLSWQLFQT). Asn133 and Asn163 each carry an N-linked (GlcNAc...) asparagine glycan. The 50-residue stretch at 160-209 (NFFNCSCDIRWMQLWQEQGEAKLNSQNLYCINADGSQLPLFRMNISQCDL) folds into the LRRCT domain. Cystine bridges form between Cys164–Cys189 and Cys166–Cys207. N-linked (GlcNAc...) asparagine glycans are attached at residues Asn203, Asn218, Asn232, Asn259, Asn267, Asn272, and Asn294. 2 Ig-like C2-type domains span residues 210 to 300 (PEIS…VALT) and 309 to 382 (SLEE…IAKN). Cys231 and Cys284 are joined by a disulfide. Cys320 and Cys362 form a disulfide bridge. N-linked (GlcNAc...) asparagine glycans are attached at residues Asn375 and Asn388. The chain crosses the membrane as a helical span at residues 430–453 (FGVSIAVGLAAFACVLLVVLFVMI). The Cytoplasmic segment spans residues 454–839 (NKYGRRSKFG…ATPIYLDILG (386 aa)). At Ser493 the chain carries Phosphoserine. Tyr516 carries the post-translational modification Phosphotyrosine; by autocatalysis. The Protein kinase domain maps to 538 to 839 (IVLKRELGEG…ATPIYLDILG (302 aa)). ATP is bound by residues 544–552 (LGEGAFGKV) and Lys572. Residue Asp679 is the Proton acceptor of the active site. Tyr705, Tyr709, and Tyr710 each carry phosphotyrosine; by autocatalysis.

This sequence belongs to the protein kinase superfamily. Tyr protein kinase family. Insulin receptor subfamily. As to quaternary structure, exists in a dynamic equilibrium between monomeric (low affinity) and dimeric (high affinity) structures. Binds SH2B2. Interacts with SQSTM1 and KIDINS220. Interacts with PTPRS. Interacts with MAPK8IP3/JIP3. In terms of processing, ligand-mediated auto-phosphorylation. As to expression, widely expressed but mainly in nervous tissue. Isoform 2 is expressed at higher levels in adult brain than in fetal brain.

The protein resides in the membrane. It carries out the reaction L-tyrosyl-[protein] + ATP = O-phospho-L-tyrosyl-[protein] + ADP + H(+). In terms of biological role, receptor tyrosine kinase involved in nervous system and probably heart development. Upon binding of its ligand NTF3/neurotrophin-3, NTRK3 autophosphorylates and activates different signaling pathways, including the phosphatidylinositol 3-kinase/AKT and the MAPK pathways, that control cell survival and differentiation. This is NT-3 growth factor receptor (NTRK3) from Homo sapiens (Human).